The chain runs to 340 residues: MFNTAKKILIMAGGTGGHIFPALAIANELKKHSSNIQWLGSNLGMENNIIPKHNIKLHTVSSVGLRGKNVISLIKAPFLLSYATLQVIKIFLKFKPDVVLGMGGFTSGIGGLVAWVFKTTLVIHEQNSIPGTTNKILNKIATKTFQAFDDTFIRNATTSGNPIVFNPIEKQNNNKLNLLIIGGSLGSKPINEIVTQLNIDINIWHQTGKLHADTVKSQYKNSAVKVTAFITEMASAYAWADIVLCRAGAMTVSELMLSATSSILIPLPNSIDNHQFHNAKILSDNNAGILIEQKDLTIELLEGILLNINKNQIKQMSSNALKIAKPNAVKQIVDYLLVSD.

UDP-N-acetyl-alpha-D-glucosamine is bound by residues T15 to G17, N127, S184, I230, and Q275.

Belongs to the glycosyltransferase 28 family. MurG subfamily.

The protein localises to the cell inner membrane. It carries out the reaction di-trans,octa-cis-undecaprenyl diphospho-N-acetyl-alpha-D-muramoyl-L-alanyl-D-glutamyl-meso-2,6-diaminopimeloyl-D-alanyl-D-alanine + UDP-N-acetyl-alpha-D-glucosamine = di-trans,octa-cis-undecaprenyl diphospho-[N-acetyl-alpha-D-glucosaminyl-(1-&gt;4)]-N-acetyl-alpha-D-muramoyl-L-alanyl-D-glutamyl-meso-2,6-diaminopimeloyl-D-alanyl-D-alanine + UDP + H(+). It functions in the pathway cell wall biogenesis; peptidoglycan biosynthesis. Cell wall formation. Catalyzes the transfer of a GlcNAc subunit on undecaprenyl-pyrophosphoryl-MurNAc-pentapeptide (lipid intermediate I) to form undecaprenyl-pyrophosphoryl-MurNAc-(pentapeptide)GlcNAc (lipid intermediate II). The chain is UDP-N-acetylglucosamine--N-acetylmuramyl-(pentapeptide) pyrophosphoryl-undecaprenol N-acetylglucosamine transferase from Vesicomyosocius okutanii subsp. Calyptogena okutanii (strain HA).